Here is a 511-residue protein sequence, read N- to C-terminus: Kinesin-like protein 8 (511 aa).

Residues 5–356 (NVRVIVRVRP…LRYSEAARRI (352 aa)) form the Kinesin motor domain. Position 107–114 (107–114 (GQKGTGKT)) interacts with ATP. 4 positions are modified to phosphoserine: serine 278, serine 279, serine 284, and serine 456. The stretch at 373–489 (EGELDDILTT…KLVKSQLHDY (117 aa)) forms a coiled coil.

Belongs to the TRAFAC class myosin-kinesin ATPase superfamily. Kinesin family.

Its subcellular location is the cytoplasm. It localises to the cytoskeleton. The chain is Kinesin-like protein 8 (klp8) from Schizosaccharomyces pombe (strain 972 / ATCC 24843) (Fission yeast).